The following is a 398-amino-acid chain: Lysophosphatidylserine lipase ABHD12 (398 aa).

The Cytoplasmic segment spans residues 1 to 74; the sequence is MRKRTEPVAL…RKGLWLRLRK (74 aa). A helical transmembrane segment spans residues 75 to 95; the sequence is ILFCVLGLYIAIPFLIKLCPG. Residues 96–398 are Extracellular-facing; that stretch reads IQAKLIFLNF…LGKSEPEHQH (303 aa). Residue asparagine 123 is glycosylated (N-linked (GlcNAc...) asparagine). The active-site Nucleophile is serine 246. Residues aspartate 333 and histidine 372 each act as charge relay system in the active site.

The protein belongs to the serine esterase family.

The protein resides in the endoplasmic reticulum membrane. It carries out the reaction 1-(9Z-octadecenoyl)-sn-glycero-3-phospho-L-serine + H2O = sn-glycero-3-phospho-L-serine + (9Z)-octadecenoate + H(+). It catalyses the reaction 1-(9Z-octadecenoyl)-sn-glycero-3-phospho-(1'-sn-glycerol) + H2O = sn-glycero-3-phospho-(1'-sn-glycerol) + (9Z)-octadecenoate + H(+). The catalysed reaction is 1-(9Z-octadecenoyl)-sn-glycero-3-phospho-(1D-myo-inositol) + H2O = sn-glycero-3-phospho-1D-myo-inositol + (9Z)-octadecenoate + H(+). The enzyme catalyses 1-(9Z-octadecenoyl)-sn-glycero-3-phosphoethanolamine + H2O = sn-glycero-3-phosphoethanolamine + (9Z)-octadecenoate + H(+). It carries out the reaction 1-(9Z-octadecenoyl)-sn-glycero-3-phosphocholine + H2O = 1-(9Z-octadecenoyl)-sn-glycerol + phosphocholine + H(+). It catalyses the reaction 2-(9Z-octadecenoyl)-glycerol + H2O = glycerol + (9Z)-octadecenoate + H(+). The catalysed reaction is 1-hexadecanoyl-sn-glycero-3-phospho-L-serine + H2O = sn-glycero-3-phospho-L-serine + hexadecanoate + H(+). The enzyme catalyses 2-(5Z,8Z,11Z,14Z-eicosatetraenoyl)-glycerol + H2O = glycerol + (5Z,8Z,11Z,14Z)-eicosatetraenoate + H(+). It carries out the reaction Hydrolyzes glycerol monoesters of long-chain fatty acids.. It catalyses the reaction 1-decanoylglycerol + H2O = decanoate + glycerol + H(+). The catalysed reaction is 1-dodecanoylglycerol + H2O = dodecanoate + glycerol + H(+). The enzyme catalyses 1-tetradecanoylglycerol + H2O = tetradecanoate + glycerol + H(+). It carries out the reaction 2-hexadecanoylglycerol + H2O = glycerol + hexadecanoate + H(+). It catalyses the reaction 1-(9Z-octadecenoyl)-glycerol + H2O = glycerol + (9Z)-octadecenoate + H(+). The catalysed reaction is 2-(9Z,12Z-octadecadienoyl)-glycerol + H2O = (9Z,12Z)-octadecadienoate + glycerol + H(+). The enzyme catalyses 1-(5Z,8Z,11Z,14Z-eicosatetraenoyl)-glycerol + H2O = glycerol + (5Z,8Z,11Z,14Z)-eicosatetraenoate + H(+). It carries out the reaction 1-(9Z,12Z-octadecadienoyl)-glycerol + H2O = (9Z,12Z)-octadecadienoate + glycerol + H(+). It catalyses the reaction 1-hexadecanoylglycerol + H2O = glycerol + hexadecanoate + H(+). The catalysed reaction is 1-octadecanoylglycerol + H2O = octadecanoate + glycerol + H(+). The enzyme catalyses 1-octadecanoyl-2-(9,10-epoxyoctadecanoyl)-sn-glycero-3-phospho-L-serine + H2O = 9,10-epoxyoctadecanoate + 1-octadecanoyl-sn-glycero-3-phosphoserine + H(+). It carries out the reaction 1-octadecanoyl-2-(10-hydroxyoctadecanoyl)-sn-glycero-3-phospho-L-serine + H2O = 1-octadecanoyl-sn-glycero-3-phosphoserine + 10-hydroxyoctadecanoate + H(+). It catalyses the reaction 1-hexadecanoyl-2-(10-hydroxyoctadecanoyl)-sn-glycero-3-phospho-L-serine + H2O = 10-hydroxyoctadecanoate + 1-hexadecanoyl-sn-glycero-3-phospho-L-serine + H(+). In terms of biological role, lysophosphatidylserine (LPS) lipase that mediates the hydrolysis of lysophosphatidylserine, a class of signaling lipids that regulates immunological and neurological processes. Represents a major lysophosphatidylserine lipase in the brain, thereby playing a key role in the central nervous system. Also able to hydrolyze oxidized phosphatidylserine; oxidized phosphatidylserine is produced in response to severe inflammatory stress and constitutes a proapoptotic 'eat me' signal. Also has monoacylglycerol (MAG) lipase activity: hydrolyzes 2-arachidonoylglycerol (2-AG), thereby acting as a regulator of endocannabinoid signaling pathways. Has a strong preference for very-long-chain lipid substrates; substrate specificity is likely due to improved catalysis and not improved substrate binding. The polypeptide is Lysophosphatidylserine lipase ABHD12 (Macaca fascicularis (Crab-eating macaque)).